Reading from the N-terminus, the 383-residue chain is Probable cell wall hydrolase LytN (383 aa).

The signal sequence occupies residues 1–49 (MFVYYCKECFIMNKQQSKVRYSIRKVSIGILSISIGMFLALGMSNKAYA). Residues 175–219 (QIYTVKKGDTLSAIALKYKTTVSNIQNTNNIANPNLIFIGQKLKV) form the LysM domain. Residues 241 to 378 (NSSTLNYLKT…NYENDMIFIR (138 aa)) form the Peptidase C51 domain.

It is found in the secreted. Its function is as follows. Probably involved in peptidoglycan hydrolysis. The protein is Probable cell wall hydrolase LytN (lytN) of Staphylococcus aureus (strain NCTC 8325 / PS 47).